Consider the following 149-residue polypeptide: Ribonuclease pancreatic (149 aa).

The N-terminal stretch at 1-25 (MGLEKSLILFPLFVLLLGWVQPSLG) is a signal peptide. The segment at 30-49 (AQKFERQHMDSSGSSNNSPT) is disordered. Residues K32 and R35 each coordinate substrate. H37 (proton acceptor) is an active-site residue. Positions 39 to 49 (DSSGSSNNSPT) are enriched in polar residues. Cystine bridges form between C51/C109, C65/C120, C83/C135, and C90/C97. Residue 66–70 (KPVNT) participates in substrate binding. Residue N87 is glycosylated (N-linked (GlcNAc...) asparagine). K91 provides a ligand contact to substrate. H144 functions as the Proton donor in the catalytic mechanism.

It belongs to the pancreatic ribonuclease family. In terms of assembly, monomer. Interacts with and forms tight 1:1 complexes with RNH1. Dimerization of two such complexes may occur. Interaction with RNH1 inhibits this protein. As to expression, pancreas.

It localises to the secreted. The enzyme catalyses an [RNA] containing cytidine + H2O = an [RNA]-3'-cytidine-3'-phosphate + a 5'-hydroxy-ribonucleotide-3'-[RNA].. The catalysed reaction is an [RNA] containing uridine + H2O = an [RNA]-3'-uridine-3'-phosphate + a 5'-hydroxy-ribonucleotide-3'-[RNA].. In terms of biological role, endonuclease that catalyzes the cleavage of RNA on the 3' side of pyrimidine nucleotides. Acts on single-stranded and double-stranded RNA. The chain is Ribonuclease pancreatic (Rnase1) from Mus pahari (Gairdner's shrew-mouse).